A 435-amino-acid polypeptide reads, in one-letter code: Glutamyl-tRNA reductase (435 aa).

Substrate is bound by residues 49–52, Ser-109, 114–116, and Gln-120; these read TCNR and EGQ. The Nucleophile role is filled by Cys-50. 198-203 contacts NADP(+); the sequence is GAGRMS.

It belongs to the glutamyl-tRNA reductase family. As to quaternary structure, homodimer.

The enzyme catalyses (S)-4-amino-5-oxopentanoate + tRNA(Glu) + NADP(+) = L-glutamyl-tRNA(Glu) + NADPH + H(+). It participates in porphyrin-containing compound metabolism; protoporphyrin-IX biosynthesis; 5-aminolevulinate from L-glutamyl-tRNA(Glu): step 1/2. It functions in the pathway porphyrin-containing compound metabolism; chlorophyll biosynthesis. Functionally, catalyzes the NADPH-dependent reduction of glutamyl-tRNA(Glu) to glutamate 1-semialdehyde (GSA). The protein is Glutamyl-tRNA reductase of Prochlorococcus marinus (strain MIT 9211).